Reading from the N-terminus, the 179-residue chain is Large ribosomal subunit protein uL5 (179 aa).

Belongs to the universal ribosomal protein uL5 family. As to quaternary structure, part of the 50S ribosomal subunit; part of the 5S rRNA/L5/L18/L25 subcomplex. Contacts the 5S rRNA and the P site tRNA. Forms a bridge to the 30S subunit in the 70S ribosome.

In terms of biological role, this is one of the proteins that bind and probably mediate the attachment of the 5S RNA into the large ribosomal subunit, where it forms part of the central protuberance. In the 70S ribosome it contacts protein S13 of the 30S subunit (bridge B1b), connecting the 2 subunits; this bridge is implicated in subunit movement. Contacts the P site tRNA; the 5S rRNA and some of its associated proteins might help stabilize positioning of ribosome-bound tRNAs. The polypeptide is Large ribosomal subunit protein uL5 (Pseudomonas fluorescens (strain SBW25)).